Reading from the N-terminus, the 241-residue chain is tRNA (guanine-N(7)-)-methyltransferase (241 aa).

Residues M1–R20 form a disordered region. S-adenosyl-L-methionine-binding residues include E71, E96, D123, and D146. D146 is a catalytic residue. Substrate is bound by residues K150, D182, and T219 to E222.

This sequence belongs to the class I-like SAM-binding methyltransferase superfamily. TrmB family.

The enzyme catalyses guanosine(46) in tRNA + S-adenosyl-L-methionine = N(7)-methylguanosine(46) in tRNA + S-adenosyl-L-homocysteine. The protein operates within tRNA modification; N(7)-methylguanine-tRNA biosynthesis. In terms of biological role, catalyzes the formation of N(7)-methylguanine at position 46 (m7G46) in tRNA. This is tRNA (guanine-N(7)-)-methyltransferase from Pseudomonas fluorescens (strain ATCC BAA-477 / NRRL B-23932 / Pf-5).